A 244-amino-acid chain; its full sequence is Transcription initiation factor TFIID subunit 14 (244 aa).

Residues 1-134 enclose the YEATS domain; that stretch reads MVATVKRTIR…PLLTEELAKS (134 aa). Acylated histone binding regions lie at residues 59-61 and 81-83; these read HPT and WGG. Residues 133–169 form a disordered region; it reads KSGSTEETTANTGTIGKRRTTTNTTAEPKAKRAKTGS. Over residues 143–157 the composition is skewed to low complexity; sequence NTGTIGKRRTTTNTT. K181 participates in a covalent cross-link: Glycyl lysine isopeptide (Lys-Gly) (interchain with G-Cter in ubiquitin).

This sequence belongs to the TAF14 family. In terms of assembly, the 1.2 MDa TFIID complex is composed of TATA binding protein (TBP) and the 14 TBP-associated factors. One copy of each TAF1, TAF2, TAF3, TAF7, TAF8, TAF11, TAF13, two copies of each TAF4, TAF5, TAF6, TAF9, TAF10, TAF12, and three copies of TAF14. TFIIF is composed of three different subunits: TFG1/RAP74, TFG2/RAP30 and TAF14. Component of the SWI/SNF global transcription activator complex. The 1.14 MDa SWI/SNF complex is composed of 11 different subunits: one copy each of SWI1, SNF2/SWI2, SNF5, SNF12/SWP73, ARP7/SWP61, ARP9/SWP59; two copies each of SWI3, SNF6, SNF11, SWP82; and three copies of TAF14/SWP29. Component of the chromatin-remodeling INO80 complex, at least composed of ARP4, ARP5, ARP8, RVB1, RVB2, TAF14, NHP10, IES1, IES3, IES4, IES6, ACT1, IES2, IES5 and INO80. Component of the NuA3 histone acetyltransferase (HAT) complex. The NuA3 HAT complex has 2 functionally distinct forms that participate in transcription. The NuA3b HAT complex contains an additional subunit, PDP3.

Its subcellular location is the nucleus. Its function is as follows. Functions as a component of the DNA-binding general transcription factor complex TFIID, the RNA polymerase II associated general transcription factor complex TFIIF, and the chromatin-remodeling complex SWI/SNF. Binding of TFIID to a promoter (with or without TATA element) is the initial step in preinitiation complex (PIC) formation. TFIID plays a key role in the regulation of gene expression by RNA polymerase II through different activities such as transcription activator interaction, core promoter recognition and selectivity, TFIIA and TFIIB interaction, chromatin modification (histone acetylation by TAF1), facilitation of DNA opening and initiation of transcription. TFIIF is essential for the initiation of transcription by RNA polymerase II. TFIIF functions include the recruitment of RNA polymerase II to the promoter bound DNA-TBP-TFIIB complex, decreasing the affinity of RNA polymerase II for non-specific DNA, allowing for the subsequent recruitment of TFIIE and TFIIH, and facilitating RNA polymerase II elongation. TAF14 acts as a chromatin reader that specifically recognizes and binds histones that are acylated. Recognizes and binds histone H3 acetylated or crotonylated at 'Lys-9' (H3K9ac and H3K9cr, respectively), with some preference for crotonylated lysine. Component of the SWI/SNF complex, an ATP-dependent chromatin-remodeling complex, is required for the positive and negative regulation of gene expression of a large number of genes. It changes chromatin structure by altering DNA-histone contacts within a nucleosome, leading eventually to a change in nucleosome position, thus facilitating or repressing binding of gene-specific transcription factors. Component of the NuA3 histone acetyltransferase complex. The NuA3 HAT complex has 2 functionally distinct forms. NuA3a binds H3K4me3, through the PHD finger of YNG1, and acetylates H3K14 at the promoter region of actively transcribed genes to promote transcription initiation. NuA3b binds H3K36me3 at the coding regions of actively transcribed genes, through the PWWP domain of PDP3, and coordinates transcription elongation. Does not bind DNA. The chain is Transcription initiation factor TFIID subunit 14 (TAF14) from Saccharomyces cerevisiae (strain ATCC 204508 / S288c) (Baker's yeast).